The sequence spans 42 residues: Mating-type M-specific polypeptide Mi (42 aa).

It localises to the cytoplasm. The protein localises to the nucleus. In terms of biological role, mating type proteins are sequence specific DNA-binding proteins that act as master switches in yeast differentiation by controlling gene expression in a cell type-specific fashion. Required for meiosis, but plays no role in conjugation. This is Mating-type M-specific polypeptide Mi (mat1-Mi) from Schizosaccharomyces pombe (strain 972 / ATCC 24843) (Fission yeast).